The sequence spans 318 residues: Extracellular metalloprotease AO090012001025 (318 aa).

An N-terminal signal peptide occupies residues 1-23 (MSHFPTLHILILVIANLQIQCFA). 3 N-linked (GlcNAc...) asparagine glycosylation sites follow: N106, N121, and N193. Residue H229 participates in Zn(2+) binding. E230 is a catalytic residue. Zn(2+) is bound at residue H233. The cysteines at positions 268 and 295 are disulfide-linked.

It belongs to the peptidase M43B family.

The protein resides in the secreted. In terms of biological role, secreted metalloproteinase that allows assimilation of proteinaceous substrates. The polypeptide is Extracellular metalloprotease AO090012001025 (Aspergillus oryzae (strain ATCC 42149 / RIB 40) (Yellow koji mold)).